The chain runs to 359 residues: MLENRVKTKQIFIGGVAIGGDAPISTQSMTFSKTADIESTKNQIDRLKLAGADLVRVAVSNEKDALALKELKKVSPLPLIADIHFHYKFALIAAQSVDAIRINPGNIGSKDKIKAVVDACKEKNIPIRIGVNAGSLEKQFDQKYGPTPKGMVESALYNAKLLEDLDFTDFKISLKASDVMRTIEAYRMLRPLVIYPFHLGVTEAGNLFSSSIKSAMALGGLLMEGIGDTMRVSITGELENEIKVARAILRHSGRLKEGINWISCPTCGRIEANLVDMASKVEKRLSHIKTPLDISVMGCVVNALGEAKHADMAIAFGNRSGLIIKEGKVIHKLAEKDLFETFVIEVENLAKEREKSLKD.

[4Fe-4S] cluster is bound by residues C264, C267, C299, and E306.

It belongs to the IspG family. The cofactor is [4Fe-4S] cluster.

The enzyme catalyses (2E)-4-hydroxy-3-methylbut-2-enyl diphosphate + oxidized [flavodoxin] + H2O + 2 H(+) = 2-C-methyl-D-erythritol 2,4-cyclic diphosphate + reduced [flavodoxin]. Its pathway is isoprenoid biosynthesis; isopentenyl diphosphate biosynthesis via DXP pathway; isopentenyl diphosphate from 1-deoxy-D-xylulose 5-phosphate: step 5/6. Its function is as follows. Converts 2C-methyl-D-erythritol 2,4-cyclodiphosphate (ME-2,4cPP) into 1-hydroxy-2-methyl-2-(E)-butenyl 4-diphosphate. This chain is 4-hydroxy-3-methylbut-2-en-1-yl diphosphate synthase (flavodoxin), found in Helicobacter pylori (strain HPAG1).